We begin with the raw amino-acid sequence, 643 residues long: Rhophilin-1 (643 aa).

Positions 1–43 are disordered; the sequence is MILEERPDGQGTGEESSRPQDDGSIRKGYGSFVQNQPGQLQSH. A compositionally biased stretch (basic and acidic residues) spans 15–25; it reads ESSRPQDDGSI. In terms of domain architecture, REM-1 spans 30–104; it reads GSFVQNQPGQ…LAELSTSVDV (75 aa). Serine 31 is subject to Phosphoserine. Over residues 32 to 42 the composition is skewed to polar residues; sequence FVQNQPGQLQS. One can recognise a BRO1 domain in the interval 115–462; that stretch reads PMIPLGLKET…LAKYSQLERE (348 aa). The PDZ domain occupies 500–577; sequence PVHMTRGEGS…EGVSLQVVSL (78 aa).

The protein belongs to the RHPN family. In terms of assembly, binds specifically to GTP-Rho. Interacts with ROPN1. As to expression, highly expressed in testis.

Its function is as follows. Has no enzymatic activity. May serve as a target for Rho, and interact with some cytoskeletal component upon Rho binding or relay a Rho signal to other molecules. This chain is Rhophilin-1 (Rhpn1), found in Mus musculus (Mouse).